Consider the following 490-residue polypeptide: Dual specificity protein kinase CLK3 (490 aa).

Tyr7 is subject to Phosphotyrosine. Phosphoserine occurs at positions 9, 49, 51, 67, 76, and 78. The segment at 22-138 is disordered; sequence RRRSYSREHE…SKRSSRSVED (117 aa). Basic and acidic residues-rich tracts occupy residues 26–56 and 63–76; these read YSREHEGRLRYPSRREPPPRRSRSRSHDRLP and EHRDSDTYRCEDRS. A compositionally biased stretch (basic residues) spans 103-116; that stretch reads TRKHAHHCHKRRTR. A compositionally biased stretch (low complexity) spans 117–130; sequence SCSSASSRSQQSSK. Ser135 bears the Phosphoserine mark. The 317-residue stretch at 156 to 472 folds into the Protein kinase domain; that stretch reads YEIVGNLGEG…LAEALLHPFF (317 aa). Residues 162–170 and Lys186 each bind ATP; that span reads LGEGTFGKV. Residue Asp283 is the Proton acceptor of the active site.

This sequence belongs to the protein kinase superfamily. CMGC Ser/Thr protein kinase family. Lammer subfamily. In terms of processing, autophosphorylates on all three types of residues.

It localises to the nucleus. The protein resides in the cytoplasm. The protein localises to the cytoplasmic vesicle. Its subcellular location is the secretory vesicle. It is found in the acrosome. It catalyses the reaction L-seryl-[protein] + ATP = O-phospho-L-seryl-[protein] + ADP + H(+). It carries out the reaction L-threonyl-[protein] + ATP = O-phospho-L-threonyl-[protein] + ADP + H(+). The enzyme catalyses L-tyrosyl-[protein] + ATP = O-phospho-L-tyrosyl-[protein] + ADP + H(+). With respect to regulation, leucettine L41 inhibits its kinase activity and affects the regulation of alternative splicing mediated by phosphorylation of SR proteins. Its function is as follows. Dual specificity kinase acting on both serine/threonine and tyrosine-containing substrates. Phosphorylates serine- and arginine-rich (SR) proteins of the spliceosomal complex. May be a constituent of a network of regulatory mechanisms that enable SR proteins to control RNA splicing and can cause redistribution of SR proteins from speckles to a diffuse nucleoplasmic distribution. Phosphorylates SRSF1 and SRSF3. Regulates the alternative splicing of tissue factor (F3) pre-mRNA in endothelial cells. This Bos taurus (Bovine) protein is Dual specificity protein kinase CLK3 (CLK3).